The following is a 271-amino-acid chain: Mannosyl-3-phosphoglycerate phosphatase (271 aa).

Asp-13 functions as the Nucleophile in the catalytic mechanism. Mg(2+) contacts are provided by Asp-13, Asp-15, and Asp-214.

This sequence belongs to the HAD-like hydrolase superfamily. MPGP family. The cofactor is Mg(2+).

The protein resides in the cytoplasm. It carries out the reaction 2-O-(alpha-D-mannosyl)-3-phosphoglycerate + H2O = (2R)-2-O-(alpha-D-mannosyl)-glycerate + phosphate. The polypeptide is Mannosyl-3-phosphoglycerate phosphatase (Escherichia coli O7:K1 (strain IAI39 / ExPEC)).